The following is a 1971-amino-acid chain: MHPVNPFGGQQPSAFAVSSSTTGTYQTKSPFRFGQPSLFGQNSTPSKSLAFSQVPSFATPSGGSHSSSLPAFGLTQTSSVGLFSSLESTPSFAATSSSSVPGNTAFSFKSTSSVGVFPSGATFGPETGEVAGSGFRKTEFKFKPLENAVFKPIPGPESEPEKTQSQISSGFFTFSHPVGSGSGGLTPFSFPQVTNSSVTSSSFIFSKPVTSNTPAFASPLSNQNVEEEKRVSTSAFGSSNSSFSTFPTASPGSLGEPFPANKPSLRQGCEEAISQVEPLPTLMKGLKRKEDQDRSPRRHCHEAAEDPDPLSRGDHPPDKRPVRLNRPRGGTLFGRTIQEVFKSNKEAGRLGSKESKESGFAEPGESDHAAVPGGSQSTMVPSRLPAVTKEEEESRDEKEDSLRGKSVRQSKRREEWIYSLGGVSSLELTAIQCKNIPDYLNDRAILEKHFSKIAKVQRVFTRRSKKLAVIHFFDHASAALARKKGKGLHKDVVIFWHKKKISPSKKLFPLKEKLGESEASQGIEDSPFQHSPLSKPIVRPAAGSLLSKSSPVKKPSLLKMHQFEADPFDSGSEGSEGLGSCVSSLSTLIGTVADTSEEKYRLLDQRDRIMRQARVKRTDLDKARAFVGTCPDMCPEKERYLRETRSQLSVFEVVPGTDQVDHAAAVKEYSRSSADQEEPLPHELRPSAVLSRTMDYLVTQIMDQKEGSLRDWYDFVWNRTRGIRKDITQQHLCDPLTVSLIEKCTRFHIHCAHFMCEEPMSSFDAKINNENMTKCLQSLKEMYQDLRNKGVFCASEAEFQGYNVLLNLNKGDILREVQQFHPDVRNSPEVNFAVQAFAALNSNNFVRFFKLVQSASYLNACLLHCYFNQIRKDALRALNVAYTVSTQRSTVFPLDGVVRMLLFRDSEEATNFLNYHGLTVADGCVELNRSAFLEPEGLCKARKSVFIGRKLTVSVGEVVNGGPLPPVPRHTPVCSFNSQNKYVGESLATELPISTQRAGGDPAGGGRGEDCEAEVDVPTLAVLPQPPPASSATPALHVQPLAPAAAPSLLQASTQPEVLLPKPAPVYSDSDLVQVVDELIQEALQVDCEEVSSAGAAYVAAALGVSNAAVEDLITAATTGILRHVAAEEVSMERQRLEEEKQRAEEERLKQERELMLTQLSEGLAAELTELTVTECVWETCSQELQSAVEIDQKVRVARCCEAVCAHLVDLFLAEEIFQTAKETLQELQCFCKYLQRWREAVAARKKFRRQMRAFPAAPCCVDVNDRLQALVPSAECPITEENLAKGLLDLGHAGKVGVSCTRLRRLRNKTAHQIKVQHFHQQLLRNAAWAPLDLPSIVSEHLPMKQKRRFWKLVLVLPDVEEQTPESPGRILENWLKVKFTGDDSMVGDIGDNAGDIQTLSVFNTLSSKGDQTVSVNVCIKVAHGTLSDSALDAVETQKDLLGTSGLMLLLPPKVKSEEVAEEELSWLSALLQLKQLLQAKPFQPALPLVVLVPSSRGDSAGRAVEDGLMLQDLVSAKLISDYIVVEIPDSVNDLQGTVKVSGAVQWLISRCPQALDLCCQTLVQYVEDGISREFSRRFFHDRRERRLASLPSQEPSTIIELFNSVLQFLASVVSSEQLCDISWPVMEFAEVGGSQLLPHLHWNSPEHLAWLKQAVLGFQLPQMDLPPPGAPWLPVCSMVIQYTSQIPSSSQTQPVLQSQVENLLCRTYQKWKNKSLSPGQELGPSVAEIPWDDIITLCINHKLRDWTPPRLPVTLEALSEDGQICVYFFKNLLRKYHVPLSWEQARMQTQRELQLSHGRSGMRSIHPPTSTFPTPLLHVHQKGKKKEESGREGSLSTEDLLRGASAEELLAQSLSSSLLEEKEENKRFEDQLQQWLSQDSQAFTESTRLPLYLPQTLVSFPDSIKTQTMVKTSTSPQNSGTGKQLRFSEASGSSLTEKLKLLERLIQSSRAEEAASELHLSALLEMVDM.

Disordered regions lie at residues 1–50 (MHPV…KSLA) and 214–406 (PAFA…RGKS). Residues 8–29 (GGQQPSAFAVSSSTTGTYQTKS) show a composition bias toward polar residues. Position 32 is an asymmetric dimethylarginine (Arg-32). The interval 33-335 (FGQPSLFGQN…RPRGGTLFGR (303 aa)) is FG-repeats. Polar residues-rich tracts occupy residues 38–50 (LFGQ…KSLA) and 214–224 (PAFASPLSNQN). Positions 232 to 253 (STSAFGSSNSSFSTFPTASPGS) are enriched in low complexity. 2 stretches are compositionally biased toward basic and acidic residues: residues 288-321 (RKED…DKRP) and 342-359 (KSNK…KESG). Positions 414 to 550 (EEWIYSLGGV…AAGSLLSKSS (137 aa)) are DNA primase. Ser-424 is subject to Phosphoserine. 2 positions are modified to N6-acetyllysine: Lys-483 and Lys-484. 3 positions are modified to phosphoserine: Ser-502, Ser-531, and Ser-550. The PCI domain occupies 768–951 (NNENMTKCLQ…RKSVFIGRKL (184 aa)). The stretch at 1124–1162 (HVAAEEVSMERQRLEEEKQRAEEERLKQERELMLTQLSE) forms a coiled coil. The interval 1793–1840 (RELQLSHGRSGMRSIHPPTSTFPTPLLHVHQKGKKKEESGREGSLSTE) is disordered.

This sequence belongs to the SAC3 family. As to quaternary structure, component of the nuclear pore complex (NPC)-associated TREX-2 complex (transcription and export complex 2), composed of at least GANP, 2 copies of ENY2, PCID2, SEM1/DSS1, and either centrin CETN2 or centrin CETN3. The TREX-2 complex also associates with ALYREF/ALY. Interacts with RNA polymerase II subunit POLR2A and with the transcription elongation factor SUPT5H/SPT5. Interacts (via FG-repeats) with NXF1; this interaction is not mediated by RNA. Interacts with nuclear envelope proteins NUP62, NUP153 and RANBP2/NUP358; interaction with NUP153 is required for full localization at the nuclear pore complex. Interacts with several RNA helicases, including DHX9, DDX21, and DDX39A/DDX39, and with DNA topoisomerase TOP2A. Directly interacts with AICDA/AID. Interacts with the glucocorticoid receptor NR3C1. Interacts with MCM3. Phosphorylation at Ser-502 is induced in B-cells by CD40-stimulation, but not by bacterial lipopolysaccharide (LPS). As to expression, expressed at low levels in lymphoid organs, including thymus, spleen and lymph nodes. Up-regulated in stimulated B-cells in spleen and Peyer's patch germinal centers (at protein level).

The protein resides in the cytoplasm. The protein localises to the nucleus. Its subcellular location is the nucleus envelope. It is found in the nuclear pore complex. It localises to the nucleoplasm. The protein resides in the chromosome. It carries out the reaction L-lysyl-[histone] + acetyl-CoA = N(6)-acetyl-L-lysyl-[histone] + CoA + H(+). In terms of biological role, as a component of the TREX-2 complex, involved in the export of mRNAs to the cytoplasm through the nuclear pores. Through the acetylation of histones, affects the assembly of nucleosomes at immunoglobulin variable region genes and promotes the recruitment and positioning of transcription complex to favor DNA cytosine deaminase AICDA/AID targeting, hence promoting somatic hypermutations. This Mus musculus (Mouse) protein is Germinal-center associated nuclear protein (Mcm3ap).